Here is a 174-residue protein sequence, read N- to C-terminus: Pectinesterase inhibitor 12 (174 aa).

The signal sequence occupies residues 1 to 20 (MKFLVSLVIFSLFLNGFATA). 2 disulfides stabilise this stretch: Cys-28/Cys-43 and Cys-100/Cys-140. An N-linked (GlcNAc...) asparagine glycan is attached at Asn-129.

This sequence belongs to the PMEI family.

Its subcellular location is the secreted. The protein resides in the extracellular space. It localises to the apoplast. Its function is as follows. Pectin methylesterase (PME) inhibitor involved in the maintenance of cell wall integrity in response to necrotrophic pathogens. Modulates PME activity and pectin methylesterification during infection by Botrytis cinerea and contributes to resistance against the pathogen. This is Pectinesterase inhibitor 12 from Arabidopsis thaliana (Mouse-ear cress).